The sequence spans 910 residues: Eukaryotic translation initiation factor 3 subunit C (910 aa).

Residues 1–21 (MSRFFANGSDSESESSEDEIQ) form a disordered region. Over residues 11–20 (SESESSEDEI) the composition is skewed to acidic residues. 4 positions are modified to phosphoserine: S34, S165, S176, and S185. Residues 157–281 (FREAPDQESE…KRAEDDEDGE (125 aa)) form a disordered region. Over residues 162-186 (DQESEAEDEVVAQESDGGDAGDDSD) the composition is skewed to acidic residues. Residues 193–207 (EAAPKAVKSAPAKAA) show a composition bias toward low complexity. Residues 209–235 (ADDDDSDDSIDWDSDSESETESSDDEN) are compositionally biased toward acidic residues. Residues 240 to 268 (MRERFLKRTTEKEEKDDDKRKDKRKEQKV) are compositionally biased toward basic and acidic residues. Residues 639–815 (FHMHINLELL…ETVVMHRSEP (177 aa)) form the PCI domain. The interval 847–910 (FFQRGNMGNR…QQQVQTIDEE (64 aa)) is disordered. Over residues 862–874 (NRNQNNQGGNWLG) the composition is skewed to low complexity. Basic residues predominate over residues 882-891 (RNRNQRGHHK). Residues 895 to 910 (DRQQQQQQQVQTIDEE) are compositionally biased toward low complexity.

The protein belongs to the eIF-3 subunit C family. In terms of assembly, component of the eukaryotic translation initiation factor 3 (eIF-3) complex. The eIF-3 complex interacts with pix.

Its subcellular location is the cytoplasm. In terms of biological role, component of the eukaryotic translation initiation factor 3 (eIF-3) complex, which is involved in protein synthesis of a specialized repertoire of mRNAs and, together with other initiation factors, stimulates binding of mRNA and methionyl-tRNAi to the 40S ribosome. The eIF-3 complex specifically targets and initiates translation of a subset of mRNAs involved in cell proliferation. The chain is Eukaryotic translation initiation factor 3 subunit C from Drosophila yakuba (Fruit fly).